A 138-amino-acid chain; its full sequence is Basic phospholipase A2 homolog promutoxin (138 aa).

The signal sequence occupies residues 1–16 (MRTLWIMAVLLLGVEG). Disulfide bonds link C42–C132, C44–C60, C59–C112, C65–C138, C66–C105, C73–C98, and C91–C103. Positions 122 to 133 (KKHRVTMKFLCK) are important for membrane-damaging activities in eukaryotes and bacteria; heparin-binding.

This sequence belongs to the phospholipase A2 family. Group II subfamily. R49 sub-subfamily. As to quaternary structure, homodimer; non-covalently linked. As to expression, expressed by the venom gland.

Its subcellular location is the secreted. Functionally, snake venom phospholipase A2 homolog that lacks enzymatic activity. Exhibits potent myotoxicity causing myonecrosis and edema in the gastrocnemius muscle of mice. Is also able to stimulate the release of IL12 (IL12A-IL12B), TNF-alpha (TNF), IL6 and IL1-beta (IL1B) from human monocytes, and induce IL2, TNFalpha and IL6 release from T-cells. A model of myotoxic mechanism has been proposed: an apo Lys49-PLA2 is activated by the entrance of a hydrophobic molecule (e.g. fatty acid) at the hydrophobic channel of the protein leading to a reorientation of a monomer. This reorientation causes a transition between 'inactive' to 'active' states, causing alignment of C-terminal and membrane-docking sites (MDoS) side-by-side and putting the membrane-disruption sites (MDiS) in the same plane, exposed to solvent and in a symmetric position for both monomers. The MDoS region stabilizes the toxin on membrane by the interaction of charged residues with phospholipid head groups. Subsequently, the MDiS region destabilizes the membrane with penetration of hydrophobic residues. This insertion causes a disorganization of the membrane, allowing an uncontrolled influx of ions (i.e. calcium and sodium), and eventually triggering irreversible intracellular alterations and cell death. This is Basic phospholipase A2 homolog promutoxin from Protobothrops mucrosquamatus (Taiwan habu).